We begin with the raw amino-acid sequence, 123 residues long: Large ribosomal subunit protein bL17 (123 aa).

Belongs to the bacterial ribosomal protein bL17 family. As to quaternary structure, part of the 50S ribosomal subunit. Contacts protein L32.

The protein is Large ribosomal subunit protein bL17 of Exiguobacterium sibiricum (strain DSM 17290 / CCUG 55495 / CIP 109462 / JCM 13490 / 255-15).